The sequence spans 213 residues: Phosphatidylserine decarboxylase proenzyme (213 aa).

S182 serves as the catalytic Schiff-base intermediate with substrate; via pyruvic acid. S182 is modified (pyruvic acid (Ser); by autocatalysis).

Belongs to the phosphatidylserine decarboxylase family. PSD-A subfamily. Heterodimer of a large membrane-associated beta subunit and a small pyruvoyl-containing alpha subunit. The cofactor is pyruvate. In terms of processing, is synthesized initially as an inactive proenzyme. Formation of the active enzyme involves a self-maturation process in which the active site pyruvoyl group is generated from an internal serine residue via an autocatalytic post-translational modification. Two non-identical subunits are generated from the proenzyme in this reaction, and the pyruvate is formed at the N-terminus of the alpha chain, which is derived from the carboxyl end of the proenzyme. The post-translation cleavage follows an unusual pathway, termed non-hydrolytic serinolysis, in which the side chain hydroxyl group of the serine supplies its oxygen atom to form the C-terminus of the beta chain, while the remainder of the serine residue undergoes an oxidative deamination to produce ammonia and the pyruvoyl prosthetic group on the alpha chain.

The protein resides in the cell membrane. It catalyses the reaction a 1,2-diacyl-sn-glycero-3-phospho-L-serine + H(+) = a 1,2-diacyl-sn-glycero-3-phosphoethanolamine + CO2. It participates in phospholipid metabolism; phosphatidylethanolamine biosynthesis; phosphatidylethanolamine from CDP-diacylglycerol: step 2/2. Its function is as follows. Catalyzes the formation of phosphatidylethanolamine (PtdEtn) from phosphatidylserine (PtdSer). The sequence is that of Phosphatidylserine decarboxylase proenzyme from Geotalea daltonii (strain DSM 22248 / JCM 15807 / FRC-32) (Geobacter daltonii).